Reading from the N-terminus, the 212-residue chain is Ion-translocating oxidoreductase complex subunit G (212 aa).

A helical transmembrane segment spans residues 9–29 (GLLLGLFALLCTGLVAIVNQL). Thr176 carries the FMN phosphoryl threonine modification.

Belongs to the RnfG family. The complex is composed of six subunits: RnfA, RnfB, RnfC, RnfD, RnfE and RnfG. FMN serves as cofactor.

The protein resides in the cell inner membrane. In terms of biological role, part of a membrane-bound complex that couples electron transfer with translocation of ions across the membrane. The chain is Ion-translocating oxidoreductase complex subunit G from Shewanella piezotolerans (strain WP3 / JCM 13877).